The primary structure comprises 264 residues: Thymidylate synthase (264 aa).

R21 serves as a coordination point for dUMP. H51 contributes to the (6R)-5,10-methylene-5,6,7,8-tetrahydrofolate binding site. Position 126–127 (126–127 (RR)) interacts with dUMP. C146 serves as the catalytic Nucleophile. Residues 166–169 (RSCD), N177, and 207–209 (HLY) contribute to the dUMP site. D169 contacts (6R)-5,10-methylene-5,6,7,8-tetrahydrofolate. A (6R)-5,10-methylene-5,6,7,8-tetrahydrofolate-binding site is contributed by S263.

It belongs to the thymidylate synthase family. Bacterial-type ThyA subfamily. As to quaternary structure, homodimer.

The protein localises to the cytoplasm. It carries out the reaction dUMP + (6R)-5,10-methylene-5,6,7,8-tetrahydrofolate = 7,8-dihydrofolate + dTMP. It participates in pyrimidine metabolism; dTTP biosynthesis. In terms of biological role, catalyzes the reductive methylation of 2'-deoxyuridine-5'-monophosphate (dUMP) to 2'-deoxythymidine-5'-monophosphate (dTMP) while utilizing 5,10-methylenetetrahydrofolate (mTHF) as the methyl donor and reductant in the reaction, yielding dihydrofolate (DHF) as a by-product. This enzymatic reaction provides an intracellular de novo source of dTMP, an essential precursor for DNA biosynthesis. This chain is Thymidylate synthase, found in Buchnera aphidicola subsp. Acyrthosiphon pisum (strain Tuc7).